A 606-amino-acid chain; its full sequence is Vitamin B12 transporter BtuB (606 aa).

Positions methionine 1–alanine 22 are cleaved as a signal peptide. Residues aspartate 29–asparagine 36 carry the TonB box motif. A TBDR plug domain is found at proline 41–threonine 153. In terms of domain architecture, TBDR beta-barrel spans serine 158–phenylalanine 606. The TonB C-terminal box signature appears at leucine 589–phenylalanine 606.

The protein belongs to the TonB-dependent receptor family. BtuB (TC 1.B.14.3.1) subfamily.

The protein resides in the cell outer membrane. Functionally, involved in the active translocation of vitamin B12 (cyanocobalamin) across the outer membrane to the periplasmic space. It derives its energy for transport by interacting with the trans-periplasmic membrane protein TonB. This Vibrio vulnificus (strain CMCP6) protein is Vitamin B12 transporter BtuB.